Consider the following 440-residue polypeptide: Chromosome partition protein MukF (440 aa).

The segment at 208–236 is leucine-zipper; it reads LSETSGTLRELQDTLEAAGDKLQANLLRI.

It belongs to the MukF family. In terms of assembly, interacts, and probably forms a ternary complex, with MukE and MukB via its C-terminal region. The complex formation is stimulated by calcium or magnesium. It is required for an interaction between MukE and MukB.

The protein resides in the cytoplasm. The protein localises to the nucleoid. Functionally, involved in chromosome condensation, segregation and cell cycle progression. May participate in facilitating chromosome segregation by condensation DNA from both sides of a centrally located replisome during cell division. Not required for mini-F plasmid partitioning. Probably acts via its interaction with MukB and MukE. Overexpression results in anucleate cells. It has a calcium binding activity. The protein is Chromosome partition protein MukF of Escherichia fergusonii (strain ATCC 35469 / DSM 13698 / CCUG 18766 / IAM 14443 / JCM 21226 / LMG 7866 / NBRC 102419 / NCTC 12128 / CDC 0568-73).